We begin with the raw amino-acid sequence, 121 residues long: uncharacterized protein (121 aa).

The tract at residues 100-121 is disordered; it reads KSFSNTKDGKKNDDDNNSSSKS.

This is an uncharacterized protein from Mycoplasma pneumoniae (strain ATCC 29342 / M129 / Subtype 1) (Mycoplasmoides pneumoniae).